The sequence spans 127 residues: Glycine cleavage system H protein 2 (127 aa).

Positions 24 to 105 constitute a Lipoyl-binding domain; that stretch reads SVTVGISDHA…PYGSWIFKLK (82 aa). N6-lipoyllysine is present on Lys65.

It belongs to the GcvH family. In terms of assembly, the glycine cleavage system is composed of four proteins: P, T, L and H. The cofactor is (R)-lipoate.

In terms of biological role, the glycine cleavage system catalyzes the degradation of glycine. The H protein shuttles the methylamine group of glycine from the P protein to the T protein. The sequence is that of Glycine cleavage system H protein 2 from Pseudomonas putida (strain ATCC 47054 / DSM 6125 / CFBP 8728 / NCIMB 11950 / KT2440).